The chain runs to 390 residues: Alkanesulfonate monooxygenase (390 aa).

Belongs to the SsuD family.

The catalysed reaction is an alkanesulfonate + FMNH2 + O2 = an aldehyde + FMN + sulfite + H2O + 2 H(+). Its function is as follows. Catalyzes the desulfonation of aliphatic sulfonates. The chain is Alkanesulfonate monooxygenase from Cupriavidus taiwanensis (strain DSM 17343 / BCRC 17206 / CCUG 44338 / CIP 107171 / LMG 19424 / R1) (Ralstonia taiwanensis (strain LMG 19424)).